The primary structure comprises 125 residues: Large ribosomal subunit protein bL12 (125 aa).

It belongs to the bacterial ribosomal protein bL12 family. As to quaternary structure, homodimer. Part of the ribosomal stalk of the 50S ribosomal subunit. Forms a multimeric L10(L12)X complex, where L10 forms an elongated spine to which 2 to 4 L12 dimers bind in a sequential fashion. Binds GTP-bound translation factors.

In terms of biological role, forms part of the ribosomal stalk which helps the ribosome interact with GTP-bound translation factors. Is thus essential for accurate translation. This is Large ribosomal subunit protein bL12 from Rickettsia africae (strain ESF-5).